The primary structure comprises 496 residues: MSTEHMEELNDQQIVRREKMAALREQGIDPFGKRFERTANSQELKDKYANLDKEQLHDKNETATIAGRLVTKRGKGKVGFAHLQDREGQIQIYVRKDAVGEENYEIFKKADLGDFLGVEGEVMRTDMGELSIKATHITHLSKALRPLPEKFHGLTDVETIYRKRYLDLISNRESFERFVTRSKIISEIRRYLDQKGFLEVETPVLHNEAGGAAARPFITHHNAQNIDMVLRIATELHLKRLIVGGMERVYEIGRIFRNEGMDATHNPEFTSIEVYQAYADFQDIMDLTEGIIQHAAKSVKGDGPVNYQGTEIKINEPFKRVHMVDAIREITGVDFWQDMTLKEAKAIAAEKKVPVEKHYTEVGHIINAFFEEFVEETLIQPTFVYGHPVAVSPLAKKNPEDQRFTDRFELFIMTKEYGNAFTELNDPIDQLSRFEAQAKAKELGDDEATGIDYDYIEALEYGMPPTGGLGIGIDRLCMLLTDTTTIRDVLLFPTMK.

Residues E409 and E416 each contribute to the Mg(2+) site.

It belongs to the class-II aminoacyl-tRNA synthetase family. Homodimer. It depends on Mg(2+) as a cofactor.

It localises to the cytoplasm. The enzyme catalyses tRNA(Lys) + L-lysine + ATP = L-lysyl-tRNA(Lys) + AMP + diphosphate. This Streptococcus pneumoniae (strain Hungary19A-6) protein is Lysine--tRNA ligase.